The following is a 356-amino-acid chain: Alanine racemase, catabolic (356 aa).

The active-site Proton acceptor; specific for D-alanine is the lysine 35. Residue lysine 35 is modified to N6-(pyridoxal phosphate)lysine. Arginine 130 serves as a coordination point for substrate. Tyrosine 253 functions as the Proton acceptor; specific for L-alanine in the catalytic mechanism. Methionine 301 is a binding site for substrate.

This sequence belongs to the alanine racemase family. It depends on pyridoxal 5'-phosphate as a cofactor.

It carries out the reaction L-alanine = D-alanine. Isomerizes L-alanine to D-alanine which is then oxidized to pyruvate by DadA. This Escherichia coli O6:H1 (strain CFT073 / ATCC 700928 / UPEC) protein is Alanine racemase, catabolic (dadX).